The primary structure comprises 566 residues: Alpha-amylase (566 aa).

A signal peptide spans 1–28 (MARRLATASLAVLAAAATALTAPTPAAA). Residues asparagine 120, glutamine 166, and aspartate 175 each contribute to the Ca(2+) site. The Nucleophile role is filled by aspartate 205. Histidine 209 is a binding site for Ca(2+). Glutamate 232 serves as the catalytic Proton donor. In terms of domain architecture, CBM20 spans 465-566 (GPGTGQTSAS…ALTLNDTWRG (102 aa)).

Belongs to the glycosyl hydrolase 13 family. Monomer. Requires Ca(2+) as cofactor.

It carries out the reaction Endohydrolysis of (1-&gt;4)-alpha-D-glucosidic linkages in polysaccharides containing three or more (1-&gt;4)-alpha-linked D-glucose units.. The polypeptide is Alpha-amylase (amy) (Streptomyces griseus).